We begin with the raw amino-acid sequence, 336 residues long: Casein kinase II subunit alpha (336 aa).

Positions 37–322 (YQLVRKLGRG…AREAMAHPYF (286 aa)) constitute a Protein kinase domain. Residues 43–51 (LGRGKYSEV) and Lys-66 each bind ATP. Asp-154 acts as the Proton acceptor in catalysis.

This sequence belongs to the protein kinase superfamily. Ser/Thr protein kinase family. CK2 subfamily. In terms of assembly, tetramer of two alpha and two beta chains. Mg(2+) is required as a cofactor.

It localises to the nucleus. Its subcellular location is the nucleolus. The enzyme catalyses L-seryl-[protein] + ATP = O-phospho-L-seryl-[protein] + ADP + H(+). It carries out the reaction L-threonyl-[protein] + ATP = O-phospho-L-threonyl-[protein] + ADP + H(+). Its function is as follows. Casein kinases are operationally defined by their preferential utilization of acidic proteins such as caseins as substrates. The alpha chain contains the catalytic site. May participate in Wnt signaling. The polypeptide is Casein kinase II subunit alpha (CkIIalpha) (Drosophila melanogaster (Fruit fly)).